Here is a 727-residue protein sequence, read N- to C-terminus: Pre-B-cell leukemia transcription factor-interacting protein 1 (727 aa).

A compositionally biased stretch (polar residues) spans 1–10; that stretch reads MASCPDSDNS. Positions 1–169 are disordered; the sequence is MASCPDSDNS…GREPSSSQPV (169 aa). Ser-131, Ser-142, Ser-143, and Ser-144 each carry phosphoserine. Thr-148 is modified (phosphothreonine). Ser-164 carries the phosphoserine modification. 2 coiled-coil regions span residues 270 to 350 and 377 to 405; these read FLLD…RGVD and DPSL…WQLL. Over residues 446 to 456 the composition is skewed to polar residues; the sequence is QGINTGRSPND. 2 disordered regions span residues 446–565 and 694–727; these read QGIN…NSPD and LKKR…YHQG. Over residues 473 to 563 the composition is skewed to basic and acidic residues; sequence WGGKEKWRGG…QKHSWGKDNS (91 aa). The Nuclear localization signal signature appears at 486–506; that stretch reads QKAEHWKPRKEESGQERQRSW. Ser-563 bears the Phosphoserine mark. The Nuclear localization signal signature appears at 691–716; the sequence is DKALKKRSRKKEKHSWNPRVVGPREE. Residues 694-703 are compositionally biased toward basic residues; it reads LKKRSRKKEK.

Interacts with ESR1, PBX1, PBX2 and PBX3. Interacts with TEX11.

It is found in the cytoplasm. Its subcellular location is the cytoskeleton. It localises to the nucleus. Its function is as follows. Regulator of pre-B-cell leukemia transcription factors (BPXs) function. Inhibits the binding of PBX1-HOX complex to DNA and blocks the transcriptional activity of E2A-PBX1. Tethers estrogen receptor-alpha (ESR1) to microtubules and allows them to influence estrogen receptors-alpha signaling. The chain is Pre-B-cell leukemia transcription factor-interacting protein 1 (Pbxip1) from Mus musculus (Mouse).